The primary structure comprises 639 residues: Chaperone protein DnaK (639 aa).

Threonine 198 carries the phosphothreonine; by autocatalysis modification. Over residues alanine 603–glutamine 618 the composition is skewed to low complexity. Residues alanine 603–lysine 639 are disordered. Residues aspartate 625–lysine 639 are compositionally biased toward acidic residues.

It belongs to the heat shock protein 70 family.

Its function is as follows. Acts as a chaperone. The sequence is that of Chaperone protein DnaK from Shewanella sp. (strain MR-7).